A 625-amino-acid chain; its full sequence is Threonine--tRNA ligase (625 aa).

An editing domain region spans residues 1-147 (MRILLIHSDY…TIVPGEAKKE (147 aa)). A catalytic region spans residues 206–505 (PHVKIMLEQE…MKKGKKPMYP (300 aa)). Zn(2+) is bound by residues C298, H350, and H474.

The protein belongs to the class-II aminoacyl-tRNA synthetase family. As to quaternary structure, homodimer. It depends on Zn(2+) as a cofactor.

The protein localises to the cytoplasm. The catalysed reaction is tRNA(Thr) + L-threonine + ATP = L-threonyl-tRNA(Thr) + AMP + diphosphate + H(+). Catalyzes the attachment of threonine to tRNA(Thr) in a two-step reaction: L-threonine is first activated by ATP to form Thr-AMP and then transferred to the acceptor end of tRNA(Thr). Also edits incorrectly charged L-seryl-tRNA(Thr). The polypeptide is Threonine--tRNA ligase (Thermococcus sibiricus (strain DSM 12597 / MM 739)).